Consider the following 64-residue polypeptide: Alpha-conotoxin CnIA (64 aa).

The N-terminal stretch at 1 to 21 (MGMRMMFTVFLLVVLTTTVVS) is a signal peptide. The propeptide occupies 22 to 47 (FPSDSASDGRDDEAKDERSDIYESKR). Cystine bridges form between cysteine 51–cysteine 56 and cysteine 52–cysteine 62. Proline 54 carries the post-translational modification 4-hydroxyproline; in CnIK; partial. Cysteine 62 is subject to Cysteine amide.

It belongs to the conotoxin A superfamily. Expressed by the venom duct.

The protein resides in the secreted. Its function is as follows. Alpha-conotoxins act on postsynaptic membranes, they bind to the nicotinic acetylcholine receptors (nAChR) and thus inhibit them. CnIA and CnIB block muscular nAChR alpha-1/gamma and alpha-1/delta subunits. The polypeptide is Alpha-conotoxin CnIA (Conus consors (Singed cone)).